The primary structure comprises 227 residues: Cytochrome c oxidase subunit 2 (227 aa).

Residues 1-14 (MAYPFQLGLQDATS) lie on the Mitochondrial intermembrane side of the membrane. The chain crosses the membrane as a helical span at residues 15–45 (PIMEELTNFHDHTLMIVFLISSLVLYIISLM). Residues 46–59 (LTTKLTHTSTMDAQ) are Mitochondrial matrix-facing. Residues 60–87 (EVETIWTILPAVILILIALPSLRILYMM) traverse the membrane as a helical segment. The Mitochondrial intermembrane segment spans residues 88 to 227 (DEINNPALTV…HFENWSASMI (140 aa)). Residues His-161, Cys-196, Glu-198, Cys-200, His-204, and Met-207 each contribute to the Cu cation site. Glu-198 serves as a coordination point for Mg(2+).

This sequence belongs to the cytochrome c oxidase subunit 2 family. As to quaternary structure, component of the cytochrome c oxidase (complex IV, CIV), a multisubunit enzyme composed of 14 subunits. The complex is composed of a catalytic core of 3 subunits MT-CO1, MT-CO2 and MT-CO3, encoded in the mitochondrial DNA, and 11 supernumerary subunits COX4I, COX5A, COX5B, COX6A, COX6B, COX6C, COX7A, COX7B, COX7C, COX8 and NDUFA4, which are encoded in the nuclear genome. The complex exists as a monomer or a dimer and forms supercomplexes (SCs) in the inner mitochondrial membrane with NADH-ubiquinone oxidoreductase (complex I, CI) and ubiquinol-cytochrome c oxidoreductase (cytochrome b-c1 complex, complex III, CIII), resulting in different assemblies (supercomplex SCI(1)III(2)IV(1) and megacomplex MCI(2)III(2)IV(2)). Found in a complex with TMEM177, COA6, COX18, COX20, SCO1 and SCO2. Interacts with TMEM177 in a COX20-dependent manner. Interacts with COX20. Interacts with COX16. Cu cation is required as a cofactor.

The protein resides in the mitochondrion inner membrane. The enzyme catalyses 4 Fe(II)-[cytochrome c] + O2 + 8 H(+)(in) = 4 Fe(III)-[cytochrome c] + 2 H2O + 4 H(+)(out). Its function is as follows. Component of the cytochrome c oxidase, the last enzyme in the mitochondrial electron transport chain which drives oxidative phosphorylation. The respiratory chain contains 3 multisubunit complexes succinate dehydrogenase (complex II, CII), ubiquinol-cytochrome c oxidoreductase (cytochrome b-c1 complex, complex III, CIII) and cytochrome c oxidase (complex IV, CIV), that cooperate to transfer electrons derived from NADH and succinate to molecular oxygen, creating an electrochemical gradient over the inner membrane that drives transmembrane transport and the ATP synthase. Cytochrome c oxidase is the component of the respiratory chain that catalyzes the reduction of oxygen to water. Electrons originating from reduced cytochrome c in the intermembrane space (IMS) are transferred via the dinuclear copper A center (CU(A)) of subunit 2 and heme A of subunit 1 to the active site in subunit 1, a binuclear center (BNC) formed by heme A3 and copper B (CU(B)). The BNC reduces molecular oxygen to 2 water molecules using 4 electrons from cytochrome c in the IMS and 4 protons from the mitochondrial matrix. The sequence is that of Cytochrome c oxidase subunit 2 (MT-CO2) from Berylmys bowersi (Bower's white-toothed rat).